Consider the following 282-residue polypeptide: Bifunctional protein FolD 2 (282 aa).

Residues 164–166 (GRS) and S189 contribute to the NADP(+) site.

This sequence belongs to the tetrahydrofolate dehydrogenase/cyclohydrolase family. Homodimer.

The enzyme catalyses (6R)-5,10-methylene-5,6,7,8-tetrahydrofolate + NADP(+) = (6R)-5,10-methenyltetrahydrofolate + NADPH. It catalyses the reaction (6R)-5,10-methenyltetrahydrofolate + H2O = (6R)-10-formyltetrahydrofolate + H(+). The protein operates within one-carbon metabolism; tetrahydrofolate interconversion. Functionally, catalyzes the oxidation of 5,10-methylenetetrahydrofolate to 5,10-methenyltetrahydrofolate and then the hydrolysis of 5,10-methenyltetrahydrofolate to 10-formyltetrahydrofolate. This Lactobacillus johnsonii (strain CNCM I-12250 / La1 / NCC 533) protein is Bifunctional protein FolD 2.